A 1058-amino-acid polypeptide reads, in one-letter code: Protein argonaute MEL1 (1058 aa).

Composition is skewed to gly residues over residues 1–12 and 24–37; these read MAYRGGGRGGRG and DVPG…GGGA. 2 disordered regions span residues 1–77 and 115–147; these read MAYR…YGAP and RAPP…PSAT. The span at 48–70 shows a compositional bias: pro residues; that stretch reads WPPPGMTPRPGPPQPQYPRPGPP. A compositionally biased stretch (low complexity) spans 121–147; that stretch reads HSSAPAPYQPAAAAPAPSSSSTAPSAT. The PAZ domain occupies 407-520; that stretch reads TVIQFVEEFL…LPMEVCKIVE (114 aa). In terms of domain architecture, Piwi spans 696 to 1016; it reads LLIVILPEVS…AAFRARYYVE (321 aa).

Belongs to the argonaute family. Ago subfamily.

Its subcellular location is the nucleus. The protein resides in the nucleolus. In terms of biological role, essential for the progression of premeiotic mitosis and meiosis during sporogenesis. Regulates the cell division of premeiotic germ cells, the proper modification of meiotic chromosomes, and the faithful progression of meiosis, probably via small RNA-mediated gene silencing. May be involved in histone H3 'Lys-9' demethylation in the pericentromeric region. The chain is Protein argonaute MEL1 (MEL1) from Oryza sativa subsp. japonica (Rice).